Consider the following 338-residue polypeptide: Aspartate-semialdehyde dehydrogenase (338 aa).

Residues 13–16 (SGAV) and 41–42 (RS) each bind NADP(+). Arginine 101 is a binding site for phosphate. Residue cysteine 132 is the Acyl-thioester intermediate of the active site. Residue glutamine 159 participates in substrate binding. Position 162–163 (162–163 (SG)) interacts with NADP(+). Lysine 216 contributes to the phosphate binding site. Substrate is bound at residue arginine 238. Catalysis depends on histidine 245, which acts as the Proton acceptor. Asparagine 317 serves as a coordination point for NADP(+).

The protein belongs to the aspartate-semialdehyde dehydrogenase family. Homodimer.

It catalyses the reaction L-aspartate 4-semialdehyde + phosphate + NADP(+) = 4-phospho-L-aspartate + NADPH + H(+). The protein operates within amino-acid biosynthesis; L-lysine biosynthesis via DAP pathway; (S)-tetrahydrodipicolinate from L-aspartate: step 2/4. It participates in amino-acid biosynthesis; L-methionine biosynthesis via de novo pathway; L-homoserine from L-aspartate: step 2/3. It functions in the pathway amino-acid biosynthesis; L-threonine biosynthesis; L-threonine from L-aspartate: step 2/5. Its function is as follows. Catalyzes the NADPH-dependent formation of L-aspartate-semialdehyde (L-ASA) by the reductive dephosphorylation of L-aspartyl-4-phosphate. The polypeptide is Aspartate-semialdehyde dehydrogenase (Shewanella violacea (strain JCM 10179 / CIP 106290 / LMG 19151 / DSS12)).